Consider the following 323-residue polypeptide: Small ribosomal subunit protein uS2 (323 aa).

The disordered stretch occupies residues 295–323; it reads VVNRDRAGFNKKQPKAEEAAKPAEKKAEK.

Belongs to the universal ribosomal protein uS2 family.

This is Small ribosomal subunit protein uS2 from Mycoplasmoides gallisepticum (strain R(low / passage 15 / clone 2)) (Mycoplasma gallisepticum).